The following is a 312-amino-acid chain: uncharacterized protein (312 aa).

Residues 1–14 (MSIVETCISFVSTN) are Extracellular-facing. A helical transmembrane segment spans residues 15-35 (PFYPFCTGLLLNCVVTPLYFW). The Cytoplasmic segment spans residues 36 to 41 (KTQNGR). The helical transmembrane segment at 42–62 (IVVVSLLQFVVLYATAFISIG) threads the bilayer. Residues 63–179 (TDKSLYRNKW…LEYDQDTATE (117 aa)) are Extracellular-facing. Residues 70–173 (NKWVALPLSK…KGPLGELEYD (104 aa)) enclose the FAD-binding FR-type domain. A helical membrane pass occupies residues 180-200 (LGIIAGGSGITPVLQVLQEII). The Cytoplasmic portion of the chain corresponds to 201 to 312 (PSPEDLTHIS…GNGTDKVFVF (112 aa)).

It belongs to the flavoprotein pyridine nucleotide cytochrome reductase family. It depends on FAD as a cofactor.

Its subcellular location is the membrane. This is an uncharacterized protein from Saccharomyces cerevisiae (strain ATCC 204508 / S288c) (Baker's yeast).